The chain runs to 633 residues: Extracellular metalloproteinase 3 (633 aa).

A signal peptide spans 1–18; the sequence is MHGLLLAGLLALPMNVLA. A propeptide spanning residues 19-246 is cleaved from the precursor; sequence HPAEQQTSSV…VHNVVDYVAS (228 aa). The N-linked (GlcNAc...) asparagine glycan is linked to N410. H429 is a Zn(2+) binding site. E430 is a catalytic residue. H433 provides a ligand contact to Zn(2+). N480 is a glycosylation site (N-linked (GlcNAc...) asparagine).

It belongs to the peptidase M36 family. The cofactor is Zn(2+).

It is found in the secreted. Its function is as follows. Secreted metalloproteinase probably acting as a virulence factor. The sequence is that of Extracellular metalloproteinase 3 (MEP3) from Arthroderma otae (Microsporum canis).